A 60-amino-acid chain; its full sequence is Large ribosomal subunit protein bL32 (60 aa).

The interval 1 to 46 (MAVQQNKKSPSKRGMHRSHNALNTPGTAIEPTTGEVHLRHHISPTG) is disordered. The segment covering 9-19 (SPSKRGMHRSH) has biased composition (basic residues).

It belongs to the bacterial ribosomal protein bL32 family.

The sequence is that of Large ribosomal subunit protein bL32 from Leptothrix cholodnii (strain ATCC 51168 / LMG 8142 / SP-6) (Leptothrix discophora (strain SP-6)).